We begin with the raw amino-acid sequence, 296 residues long: Putative peptide transport system permease protein BruAb2_1032 (296 aa).

Helical transmembrane passes span 35–55 (IGLV…WITN), 97–117 (LWIG…IGIA), 131–151 (VMDA…SAAL), 205–225 (ILPN…AYAI), 229–249 (ATLS…GSIV), and 260–280 (WWIM…INLI). The 185-residue stretch at 97–281 (LWIGLTVAVL…ISALAINLIG (185 aa)) folds into the ABC transmembrane type-1 domain.

Belongs to the binding-protein-dependent transport system permease family. In terms of assembly, the complex is composed of two ATP-binding proteins (BruAb2_1033 and BruAb2_1034), two transmembrane proteins (BruAb2_1031 and BruAb2_1032) and a solute-binding protein (BruAb2_1030).

The protein localises to the cell inner membrane. Functionally, probably part of an ABC transporter complex that could be involved in peptide import. Probably responsible for the translocation of the substrate across the membrane. In Brucella abortus biovar 1 (strain 9-941), this protein is Putative peptide transport system permease protein BruAb2_1032.